We begin with the raw amino-acid sequence, 740 residues long: Anaphase-promoting complex subunit 5 (740 aa).

Position 180 is a phosphoserine (S180). TPR repeat units follow at residues 194–234 (QKQA…FNPD), 235–285 (FAEA…GRSL), 286–322 (RYAALNLAALHCRFGHYQQAELALQEAIRIAQESNDH), 323–363 (VCLQ…YLAS), 364–403 (LGIQSLVQQRAFAGKTANKLMDALKDSDLLHWKHSLSELI), 404–451 (DISI…TESF), 452–485 (AVALCHLAELHAEQGCFAAAGEVLKHLKDRFPPN), 486–525 (SQHAQLWMLCDQKIQFDRAMNDGKFHLADSLVTGITALNG), 526–565 (IEGVYRKAVVLQAQNQMTEAHKLLQKLLTYCQKLKNTEMV), 566–605 (ISVLLSVAELYWRSSSPTIAMPVLLEALALSKEYRLQYLA), 606–645 (SETVLNLAYAQLILGIPEQALTLLHMAIEPILADGAVLDK), 646–681 (GRAMFLVSKCQVASAASYDPVKKAEALEAAIQNLSE), and 682–721 (AKNYFAQVDCRERIRDVAYFQARLYHALGKTQERNHCAMI). The residue at position 217 (T217) is a Phosphothreonine.

Belongs to the APC5 family. As to quaternary structure, the mammalian APC/C is composed at least of 14 distinct subunits ANAPC1, ANAPC2, CDC27/APC3, ANAPC4, ANAPC5, CDC16/APC6, ANAPC7, CDC23/APC8, ANAPC10, ANAPC11, CDC26/APC12, ANAPC13, ANAPC15 and ANAPC16 that assemble into a complex of at least 19 chains with a combined molecular mass of around 1.2 MDa; APC/C interacts with FZR1 and FBXO5.

The protein localises to the nucleus. Its subcellular location is the cytoplasm. It is found in the cytoskeleton. The protein resides in the spindle. It participates in protein modification; protein ubiquitination. Its function is as follows. Component of the anaphase promoting complex/cyclosome (APC/C), a cell cycle-regulated E3 ubiquitin ligase that controls progression through mitosis and the G1 phase of the cell cycle. The APC/C complex acts by mediating ubiquitination and subsequent degradation of target proteins: it mainly mediates the formation of 'Lys-11'-linked polyubiquitin chains and, to a lower extent, the formation of 'Lys-48'- and 'Lys-63'-linked polyubiquitin chains. The APC/C complex catalyzes assembly of branched 'Lys-11'-/'Lys-48'-linked branched ubiquitin chains on target proteins. This chain is Anaphase-promoting complex subunit 5 (Anapc5), found in Mus musculus (Mouse).